Here is a 67-residue protein sequence, read N- to C-terminus: DNA-directed RNA polymerase subunit omega (67 aa).

Belongs to the RNA polymerase subunit omega family. In terms of assembly, the RNAP catalytic core consists of 2 alpha, 1 beta, 1 beta' and 1 omega subunit. When a sigma factor is associated with the core the holoenzyme is formed, which can initiate transcription.

It catalyses the reaction RNA(n) + a ribonucleoside 5'-triphosphate = RNA(n+1) + diphosphate. Its function is as follows. Promotes RNA polymerase assembly. Latches the N- and C-terminal regions of the beta' subunit thereby facilitating its interaction with the beta and alpha subunits. The chain is DNA-directed RNA polymerase subunit omega from Albidiferax ferrireducens (strain ATCC BAA-621 / DSM 15236 / T118) (Rhodoferax ferrireducens).